The primary structure comprises 149 residues: NPC intracellular cholesterol transporter 2 (149 aa).

A signal peptide spans 1–19 (MRFLTVAFLFLALSASALA). 3 disulfides stabilise this stretch: Cys-27–Cys-140, Cys-42–Cys-47, and Cys-93–Cys-99. The N-linked (GlcNAc...) asparagine glycan is linked to Asn-58. Lys-116 bears the N6-acetyllysine mark.

This sequence belongs to the NPC2 family. In terms of assembly, interacts with NPC1 (via the second lumenal domain) in a cholestrol-dependent manner. Interacts with NUS1/NgBR, the interaction stabilizes NCP2 and regulates cholesterol trafficking. Interacts with DHDDS. Interacts with NEDD4L (via C2 domain). Interacts with NPC1L1. In terms of tissue distribution, expressed in kidney, spleen, liver and mammary gland, but not in testis.

Its subcellular location is the secreted. The protein resides in the endoplasmic reticulum. The protein localises to the lysosome. It carries out the reaction cholesterol(in) = cholesterol(out). Its function is as follows. Intracellular cholesterol transporter which acts in concert with NPC1 and plays an important role in the egress of cholesterol from the lysosomal compartment. Unesterified cholesterol that has been released from LDLs in the lumen of the late endosomes/lysosomes is transferred by NPC2 to the cholesterol-binding pocket in the N-terminal domain of NPC1. May bind and mobilize cholesterol that is associated with membranes. NPC2 binds cholesterol with a 1:1 stoichiometry. Can bind a variety of sterols, including lathosterol, desmosterol and the plant sterols stigmasterol and beta-sitosterol. The secreted form of NCP2 regulates biliary cholesterol secretion via stimulation of ABCG5/ABCG8-mediated cholesterol transport. This chain is NPC intracellular cholesterol transporter 2, found in Bos taurus (Bovine).